The sequence spans 301 residues: tRNA dimethylallyltransferase (301 aa).

12–19 (GPTASGKT) is an ATP binding site. Residue 14–19 (TASGKT) participates in substrate binding. Residues 37–40 (DSLS) are interaction with substrate tRNA.

It belongs to the IPP transferase family. As to quaternary structure, monomer. Mg(2+) serves as cofactor.

It catalyses the reaction adenosine(37) in tRNA + dimethylallyl diphosphate = N(6)-dimethylallyladenosine(37) in tRNA + diphosphate. Catalyzes the transfer of a dimethylallyl group onto the adenine at position 37 in tRNAs that read codons beginning with uridine, leading to the formation of N6-(dimethylallyl)adenosine (i(6)A). This Sulfurovum sp. (strain NBC37-1) protein is tRNA dimethylallyltransferase.